The sequence spans 599 residues: Sulfite reductase [NADPH] flavoprotein alpha-component (599 aa).

The region spanning 64-202 is the Flavodoxin-like domain; that stretch reads ITIISASQTG…AASEWRARVV (139 aa). Residues 70-75, 117-120, and 153-162 contribute to the FMN site; these read SQTGNA, STQG, and LGDSSYEFFC. The 215-residue stretch at 234-448 folds into the FAD-binding FR-type domain; it reads DSPLVASLSV…IEHNDNFRLP (215 aa). FAD contacts are provided by residues Thr-322, Ala-356, 386–389, 404–406, Tyr-410, and 419–422; these read RLYS, TVG, and GGAS. NADP(+) contacts are provided by residues 519–520, 525–529, and Asp-561; these read SR and KVYVQ. Tyr-599 lines the FAD pocket.

This sequence belongs to the NADPH-dependent sulphite reductase flavoprotein subunit CysJ family. It in the N-terminal section; belongs to the flavodoxin family. The protein in the C-terminal section; belongs to the flavoprotein pyridine nucleotide cytochrome reductase family. As to quaternary structure, alpha(8)-beta(8). The alpha component is a flavoprotein, the beta component is a hemoprotein. FAD serves as cofactor. Requires FMN as cofactor.

It carries out the reaction hydrogen sulfide + 3 NADP(+) + 3 H2O = sulfite + 3 NADPH + 4 H(+). The protein operates within sulfur metabolism; hydrogen sulfide biosynthesis; hydrogen sulfide from sulfite (NADPH route): step 1/1. Functionally, component of the sulfite reductase complex that catalyzes the 6-electron reduction of sulfite to sulfide. This is one of several activities required for the biosynthesis of L-cysteine from sulfate. The flavoprotein component catalyzes the electron flow from NADPH -&gt; FAD -&gt; FMN to the hemoprotein component. The chain is Sulfite reductase [NADPH] flavoprotein alpha-component from Escherichia coli O9:H4 (strain HS).